Here is a 343-residue protein sequence, read N- to C-terminus: Holliday junction branch migration complex subunit RuvB (343 aa).

The tract at residues 4–184 (SDRLISAKAG…FGIVQRLEFY (181 aa)) is large ATPase domain (RuvB-L). Residues isoleucine 23, arginine 24, glycine 65, lysine 68, threonine 69, threonine 70, 131–133 (EDY), arginine 174, tyrosine 184, and arginine 221 each bind ATP. Threonine 69 serves as a coordination point for Mg(2+). A small ATPAse domain (RuvB-S) region spans residues 185 to 255 (NHQDLTHIIT…IADQALNMLK (71 aa)). A head domain (RuvB-H) region spans residues 258–343 (SQGFDHMDRR…RSGREDDLFE (86 aa)). 3 residues coordinate DNA: arginine 294, arginine 313, and arginine 318.

This sequence belongs to the RuvB family. As to quaternary structure, homohexamer. Forms an RuvA(8)-RuvB(12)-Holliday junction (HJ) complex. HJ DNA is sandwiched between 2 RuvA tetramers; dsDNA enters through RuvA and exits via RuvB. An RuvB hexamer assembles on each DNA strand where it exits the tetramer. Each RuvB hexamer is contacted by two RuvA subunits (via domain III) on 2 adjacent RuvB subunits; this complex drives branch migration. In the full resolvosome a probable DNA-RuvA(4)-RuvB(12)-RuvC(2) complex forms which resolves the HJ.

Its subcellular location is the cytoplasm. The enzyme catalyses ATP + H2O = ADP + phosphate + H(+). The RuvA-RuvB-RuvC complex processes Holliday junction (HJ) DNA during genetic recombination and DNA repair, while the RuvA-RuvB complex plays an important role in the rescue of blocked DNA replication forks via replication fork reversal (RFR). RuvA specifically binds to HJ cruciform DNA, conferring on it an open structure. The RuvB hexamer acts as an ATP-dependent pump, pulling dsDNA into and through the RuvAB complex. RuvB forms 2 homohexamers on either side of HJ DNA bound by 1 or 2 RuvA tetramers; 4 subunits per hexamer contact DNA at a time. Coordinated motions by a converter formed by DNA-disengaged RuvB subunits stimulates ATP hydrolysis and nucleotide exchange. Immobilization of the converter enables RuvB to convert the ATP-contained energy into a lever motion, pulling 2 nucleotides of DNA out of the RuvA tetramer per ATP hydrolyzed, thus driving DNA branch migration. The RuvB motors rotate together with the DNA substrate, which together with the progressing nucleotide cycle form the mechanistic basis for DNA recombination by continuous HJ branch migration. Branch migration allows RuvC to scan DNA until it finds its consensus sequence, where it cleaves and resolves cruciform DNA. The sequence is that of Holliday junction branch migration complex subunit RuvB from Marinobacter nauticus (strain ATCC 700491 / DSM 11845 / VT8) (Marinobacter aquaeolei).